The sequence spans 426 residues: Glutamate-1-semialdehyde 2,1-aminomutase (426 aa).

Lys265 carries the post-translational modification N6-(pyridoxal phosphate)lysine.

It belongs to the class-III pyridoxal-phosphate-dependent aminotransferase family. HemL subfamily. As to quaternary structure, homodimer. The cofactor is pyridoxal 5'-phosphate.

It localises to the cytoplasm. The enzyme catalyses (S)-4-amino-5-oxopentanoate = 5-aminolevulinate. The protein operates within porphyrin-containing compound metabolism; protoporphyrin-IX biosynthesis; 5-aminolevulinate from L-glutamyl-tRNA(Glu): step 2/2. The polypeptide is Glutamate-1-semialdehyde 2,1-aminomutase (Salmonella enteritidis PT4 (strain P125109)).